A 252-amino-acid chain; its full sequence is 3-dehydroquinate dehydratase (252 aa).

3-dehydroquinate is bound by residues 46 to 48 and Arg-82; that span reads EWR. The Proton donor/acceptor role is filled by His-143. Catalysis depends on Lys-170, which acts as the Schiff-base intermediate with substrate. 3-dehydroquinate contacts are provided by Arg-212, Ser-231, and Gln-235.

Belongs to the type-I 3-dehydroquinase family. In terms of assembly, homodimer.

It carries out the reaction 3-dehydroquinate = 3-dehydroshikimate + H2O. It participates in metabolic intermediate biosynthesis; chorismate biosynthesis; chorismate from D-erythrose 4-phosphate and phosphoenolpyruvate: step 3/7. In terms of biological role, involved in the third step of the chorismate pathway, which leads to the biosynthesis of aromatic amino acids. Catalyzes the cis-dehydration of 3-dehydroquinate (DHQ) and introduces the first double bond of the aromatic ring to yield 3-dehydroshikimate. This Listeria monocytogenes serotype 4b (strain CLIP80459) protein is 3-dehydroquinate dehydratase.